Here is a 631-residue protein sequence, read N- to C-terminus: MESPALSEFDLHLFAEGRHWHIYNVLGAHLVNHRGTEGTRFAVWAPNARAVSVIGDFNNWDSGRHAMAVNNGYGVWSLFIPGVKAGHLYKFAITTRNGHHITKTDPYGQAFEHRPSNAAVVTERGHYAWGDGDWLERRNRFDWQQSPISVYEVHPGSWRHHGSGRWLTYRELADQLVPYVLETGFTHIELLPVTEHPLDESWGYQTTGYYAPTSRFGSPDDLRYFVDQCHQNNIGVILDWVPGHFPDDDFALAEFDGTALYEHEDPRRGRHQDWGTLIYNYGRHEVRNFLIGSALFWLDTFHMDGLRVDAVASMLYLNYSRNEGEWLPNEHGGHENLDAIRFLQDLNRVCQSRFPGVLMMAEESTSWPRVTRPPEIGGLGFNLKWNMGWMHDTLHYLQQDPVYRQYHHDKLTFGLLYAFSENFVLPLSHDEVVHGKSSLIQKMPGDDWQQRASLRLLFSYMFSYPGAKLLFMGGEFGQRQEWSERRELDWYLLQYPEHQGLRKLVQDLNGLYRRYPALHRKSFTSEGFEWIDCHDSTQSVISFLRNPGTPEHGPLVIVANFTPIPRHHYRIGVPTGGNWQEIFNSDSTWYGGSNLGNPLLLQAEPTPWMARPCSVELTVPPLGLVMLRPAT.

Asp-309 functions as the Nucleophile in the catalytic mechanism. Glu-362 serves as the catalytic Proton donor.

This sequence belongs to the glycosyl hydrolase 13 family. GlgB subfamily. As to quaternary structure, monomer.

The enzyme catalyses Transfers a segment of a (1-&gt;4)-alpha-D-glucan chain to a primary hydroxy group in a similar glucan chain.. The protein operates within glycan biosynthesis; glycogen biosynthesis. Functionally, catalyzes the formation of the alpha-1,6-glucosidic linkages in glycogen by scission of a 1,4-alpha-linked oligosaccharide from growing alpha-1,4-glucan chains and the subsequent attachment of the oligosaccharide to the alpha-1,6 position. The sequence is that of 1,4-alpha-glucan branching enzyme GlgB from Marinobacter nauticus (strain ATCC 700491 / DSM 11845 / VT8) (Marinobacter aquaeolei).